A 722-amino-acid chain; its full sequence is Homeobox-leucine zipper protein HDG11 (722 aa).

Gly residues predominate over residues 1–19 (MSFVVGVGGSGSGSGGDGG). Residues 1-42 (MSFVVGVGGSGSGSGGDGGGSHHHDGSETDRKKKRYHRHTAQ) form a disordered region. The segment covering 20–31 (GSHHHDGSETDR) has biased composition (basic and acidic residues). Residues 32–91 (KKKRYHRHTAQQIQRLESSFKECPHPDEKQRNQLSRELGLAPRQIKFWFQNRRTQLKAQH) constitute a DNA-binding region (homeobox). Residues 81-161 (QNRRTQLKAQ…LERMSTIASK (81 aa)) adopt a coiled-coil conformation. The 234-residue stretch at 227–460 (SDMDKPIMTG…LQRMCERFAS (234 aa)) folds into the START domain.

The protein belongs to the HD-ZIP homeobox family. Class IV subfamily. In terms of assembly, interacts with BBM. As to expression, expressed in apical meristems and young epidermal tissue including trichomes and stipules. Expressed in lateral root tips, the L1 layer of apical inflorescence meristems and early flower primordia, carpel and petal epidermis, stigma papillae, ovule primordia, nucellus and embryo.

Its subcellular location is the nucleus. In terms of biological role, transcription factor which acts as a positive regulator of drought stress tolerance. Can transactivate CIPK3, NCED3 and ERECTA. Transactivates several cell-wall-loosening protein genes by directly binding to HD motifs in their promoters. These target genes play important roles in coordinating cell-wall extensibility with root development and growth. Transactivates CYP74A/AOS, AOC3, OPR3 and 4CLL5/OPCL1 genes by directly binding to HD motifs in their promoters. These target genes are involved in jasmonate (JA) biosynthesis, and JA signaling affects root architecture by activating auxin signaling, which promotes lateral root formation. Acts as a negative regulator of trichome branching. Required for the establishment of giant cell identity on the abaxial side of sepals. Seems to promote cell differentiation. May regulate cell differentiation and proliferation during root and shoot meristem development. The sequence is that of Homeobox-leucine zipper protein HDG11 from Arabidopsis thaliana (Mouse-ear cress).